The chain runs to 407 residues: Phosphonoacetate hydrolase (407 aa).

Zn(2+)-binding residues include Asp-25, Thr-64, Asp-202, His-206, Asp-241, His-242, and His-368. Residues Thr-64 and Asp-202 each coordinate substrate. Substrate-binding residues include His-242 and His-368.

This sequence belongs to the alkaline phosphatase family. PhnA subfamily. Homodimer. Requires Zn(2+) as cofactor.

It carries out the reaction phosphonoacetate + H2O = acetate + phosphate + H(+). In terms of biological role, specifically hydrolyzes phosphonoacetate. Does not have activity on other organophosphonates or acetates. In Pseudomonas putida (Arthrobacter siderocapsulatus), this protein is Phosphonoacetate hydrolase.